The following is a 728-amino-acid chain: Sodium-dependent transporter snf-5 (728 aa).

Residues 1–84 (MADSGSNEEA…PEEEEEKRDG (84 aa)) lie on the Cytoplasmic side of the membrane. The disordered stretch occupies residues 1-84 (MADSGSNEEA…PEEEEEKRDG (84 aa)). Low complexity-rich tracts occupy residues 29–50 (QQVS…STQS) and 60–73 (KNTT…TLDT). Residues 85-105 (FGNSFEFVLTSLGLAVGLGNI) form a helical membrane-spanning segment. Positions 97, 99, 100, and 104 each coordinate Na(+). The Extracellular portion of the chain corresponds to 106–119 (WRFPTRAYNNGGSA). A helical membrane pass occupies residues 120-140 (FLIPYLTCAFLFGLPAVYFEF). At 141-162 (LTGQYQGKSPPVIFRRVRPILE) the chain is on the cytoplasmic side. The chain crosses the membrane as a helical span at residues 163–183 (GVGWMGVFVAALVAIYYIVIV). The Extracellular segment spans residues 184–285 (SWISIYMINI…PSSGMLDFGG (102 aa)). Cysteine 204 and cysteine 214 are disulfide-bonded. N-linked (GlcNAc...) asparagine glycans are attached at residues asparagine 210, asparagine 225, asparagine 232, asparagine 237, and asparagine 257. A helical transmembrane segment spans residues 286 to 306 (FNWPVFAAMSVCWLLTGLGIL). The Cytoplasmic segment spans residues 307-314 (KGAKIMGK). A helical transmembrane segment spans residues 315-335 (ISYVSVLVPYVLVVVLFINGV). The Extracellular segment spans residues 336 to 364 (FQDGSGVGLEMYFGTPNYTKLYEQDTWTE). Asparagine 352 carries an N-linked (GlcNAc...) asparagine glycan. Residues 365–386 (ALKQLCFSLSVGHGGLISLSSY) traverse the membrane as a helical segment. Serine 372 contacts Na(+). Topologically, residues 387 to 396 (SPKRNNIFRD) are cytoplasmic. Residues 397–417 (ALIVIIGDTTMSLVGGGAVFA) traverse the membrane as a helical segment. Residues 418-451 (TLGYLAKATGQDVKDVVKSGLSLAFVVYPEAMTR) are Extracellular-facing. A helical membrane pass occupies residues 452-472 (MPVPWLWCFIFFLMLFLLGAS). Leucine 469 contributes to the Na(+) binding site. Over 473–495 (TEIALVDVFCSCIYDQYPRFRNR) the chain is Cytoplasmic. The helical transmembrane segment at 496–516 (KWIVVIAWCSVLYCIGLVFST) threads the bilayer. Residues 517–531 (RAGYYWFEMFDEYAA) are Extracellular-facing. A helical membrane pass occupies residues 532-552 (GFSSVCTVVCELLVMMYIYGF). Over 553-578 (RNVRDDITEVVGHARNKFTGAIGAHS) the chain is Cytoplasmic. The chain crosses the membrane as a helical span at residues 579–599 (WYFTANWMVISPSIALILVGL). At 600-616 (SFVREYPYMGRHDIYPA) the chain is on the extracellular side. The chain crosses the membrane as a helical span at residues 617-637 (VFDIFGWFLSFLPVIIVPIFM). Topologically, residues 638–728 (LLNFIRCRNR…DTSSTYHQVY (91 aa)) are cytoplasmic. Positions 687–699 (PWDEENVDLTDSE) are enriched in acidic residues. The interval 687-728 (PWDEENVDLTDSESESRNAASGDVPIDDVATIDTSSTYHQVY) is disordered. Positions 718–728 (IDTSSTYHQVY) are enriched in polar residues.

It belongs to the sodium:neurotransmitter symporter (SNF) (TC 2.A.22) family. Expressed in the INT-9 cells and posterior cells of the alimentary canal of the intestine, gut epithelial cells, the pharynx of some worms, two cells of the rectal gland, and in DVA, DVB and DVC neurons and amphid sensory neurons ASI, ADF and ASK neurons.

It is found in the cell membrane. Functionally, sodium-dependent amino acid transporter that mediates the uptake of the L-enantiomers of various amino acids, including L-proline and L-methionine, and also of acidic amino acids such as L-glutamic acid and L-aspartic acid. May additionally have a role in potassium-dependent amino acid absorption. In response to the availability of amino acid nutrients, may play a role in dauer formation. May play a role in promoting fertility. In Caenorhabditis elegans, this protein is Sodium-dependent transporter snf-5.